We begin with the raw amino-acid sequence, 947 residues long: Mitogen-activated protein kinase kinase kinase 14 (947 aa).

Disordered regions lie at residues 1 to 37 (MAVM…KKQS) and 135 to 171 (KGKR…TPEQ). Positions 135 to 151 (KGKRRSKARKKRKKKSS) are enriched in basic residues. The region spanning 400–655 (ATHQLRLGRG…ELGGKVNRAL (256 aa)) is the Protein kinase domain. The interval 401–653 (THQLRLGRGS…AAELGGKVNR (253 aa)) is interaction with ZFP91. ATP is bound by residues 406–414 (LGRGSFGEV) and K429. D515 functions as the Proton acceptor in the catalytic mechanism. T559 is subject to Phosphothreonine. 2 disordered regions span residues 662–766 (KSPW…ATVP) and 805–830 (LSDD…GVHS). A compositionally biased stretch (basic and acidic residues) spans 665-674 (WRGEYKEPRH). A compositionally biased stretch (pro residues) spans 713 to 727 (LQPPLPPEPPEPNKS). Residues 741–752 (EPLPLSSLEPAP) are compositionally biased toward low complexity. A compositionally biased stretch (polar residues) spans 814 to 829 (SKASQSSRDTLSSGVH).

It belongs to the protein kinase superfamily. STE Ser/Thr protein kinase family. MAP kinase kinase kinase subfamily. In terms of assembly, interacts with TRAF2, TRAF5, TRAF6, IKKA and NFKB2/P100. Interacts with TRAF3 and PELI3. Interacts with NIBP; the interaction is direct. Interacts with ARRB1 and ARRB2. Interacts with GRB10. Interacts with ZFP91. Interacts with NLRP12; this interaction promotes proteasomal degradation of MAP3K14. Directly interacts with DDX3X. Interacts (via C-terminus and kinase domain) with PPPC3A (via N-terminus) and PPP3CB. Post-translationally, autophosphorylated. Phosphorylation at Thr-559 is required to activate its kinase activity and 'Lys-63'-linked polyubiquitination. Phosphorylated by CHUK/IKKA leading to MAP3K14 destabilization. Ubiquitinated. Undergoes both 'Lys-48'- and 'Lys-63'-linked polyubiquitination. 'Lys-48'-linked polyubiquitination leads to its degradation by the proteasome, while 'Lys-63'-linked polyubiquitination stabilizes and activates it. As to expression, weakly expressed in testis, small intestine, spleen, thymus, peripheral blood leukocytes, prostate, ovary and colon.

It localises to the cytoplasm. It carries out the reaction L-seryl-[protein] + ATP = O-phospho-L-seryl-[protein] + ADP + H(+). It catalyses the reaction L-threonyl-[protein] + ATP = O-phospho-L-threonyl-[protein] + ADP + H(+). In terms of biological role, lymphotoxin beta-activated kinase which seems to be exclusively involved in the activation of NF-kappa-B and its transcriptional activity. Phosphorylates CHUK/IKKA, thereby promoting proteolytic processing of NFKB2/P100, which leads to NF-kappa-B activation via the non-canonical pathway. Has an essential role in the non-canonical NF-kappa-B signaling that regulates genes encoding molecules involved in B-cell survival, lymphoid organogenesis, and immune response. Could act in a receptor-selective manner. The chain is Mitogen-activated protein kinase kinase kinase 14 from Homo sapiens (Human).